A 344-amino-acid chain; its full sequence is Lipase chaperone (344 aa).

The helical transmembrane segment at 14-34 threads the bilayer; it reads AAIYGGVGLAAVAGVAMWSGA.

Belongs to the lipase chaperone family.

The protein resides in the cell inner membrane. Functionally, may be involved in the folding of the extracellular lipase during its passage through the periplasm. This chain is Lipase chaperone, found in Burkholderia cenocepacia (strain ATCC BAA-245 / DSM 16553 / LMG 16656 / NCTC 13227 / J2315 / CF5610) (Burkholderia cepacia (strain J2315)).